Reading from the N-terminus, the 834-residue chain is Membrane-associated lipoprotein (834 aa).

The first 25 residues, 1–25 (MKKNKLTTLALILPITILTPIVIAS), serve as a signal peptide directing secretion. A lipid anchor (N-palmitoyl cysteine) is attached at cysteine 26. Cysteine 26 carries the S-diacylglycerol cysteine lipid modification. Residues 143-237 (RLKDTFDFKL…LLEVSGFKSN (95 aa)) form the Lipoprotein-associated type-17 domain.

It localises to the cell membrane. This Ureaplasma parvum serovar 3 (strain ATCC 700970) protein is Membrane-associated lipoprotein.